The sequence spans 240 residues: Large ribosomal subunit protein bL25 (240 aa).

2 disordered regions span residues 1–21 (MAENVLSAQKRTEQGKGPARR) and 204–240 (GAAPAAGAAAPAGGAAPAAGAAPAKGGEAKGGDKAKK). Positions 204-229 (GAAPAAGAAAPAGGAAPAAGAAPAKG) are enriched in low complexity. Basic and acidic residues predominate over residues 230 to 240 (GEAKGGDKAKK).

The protein belongs to the bacterial ribosomal protein bL25 family. CTC subfamily. Part of the 50S ribosomal subunit; part of the 5S rRNA/L5/L18/L25 subcomplex. Contacts the 5S rRNA. Binds to the 5S rRNA independently of L5 and L18.

This is one of the proteins that binds to the 5S RNA in the ribosome where it forms part of the central protuberance. This Anaeromyxobacter dehalogenans (strain 2CP-1 / ATCC BAA-258) protein is Large ribosomal subunit protein bL25.